Here is a 293-residue protein sequence, read N- to C-terminus: Actin-related protein 2/3 complex subunit 2 (293 aa).

This sequence belongs to the ARPC2 family. In terms of assembly, component of the Arp2/3 complex composed of arpB/Arp2, arpC/Arp3, arcA/p41-arc, arcB/p34-arc, arcC/p21-arc, arcD/p20-arc and arcE/p16-arc. Interacts with carmil (via the region between the LRR domain and COOH-terminal proline-rich domain); carmil is required for Arp2/3-dependent actin nucleation. Arp2/3 complex, MyoB, MyoC, and the alpha and beta subunits of capping protein all form a larger complex with carmil.

It is found in the cytoplasm. The protein resides in the cytoskeleton. The protein localises to the cell projection. Its subcellular location is the cytosol. It localises to the cell cortex. It is found in the pseudopodium. Functions as a component of the Arp2/3 complex which is involved in regulation of actin polymerization and together with an activating nucleation-promoting factor (NPF) mediates the formation of branched actin networks. Seems to contact the pointed end of the daughter actin filament. The Arp2/3 complex is involved in organizing the actin system in cell motility and chemotaxis, in phagocytosis and macropinocytosis, at late steps of endosome processing, and in mitosis. In concert with a group of other proteins, the Arp2/3 complex plays a general role in the rapid activation and adaptation of the actin system to its multiple functions. In Dictyostelium discoideum (Social amoeba), this protein is Actin-related protein 2/3 complex subunit 2 (arcB).